Reading from the N-terminus, the 415-residue chain is L-cysteine:1D-myo-inositol 2-amino-2-deoxy-alpha-D-glucopyranoside ligase 2 (415 aa).

C44 contributes to the Zn(2+) binding site. Residues 44-47 (CGIT), T59, and 82-84 (NIT) contribute to the L-cysteinyl-5'-AMP site. A 'HIGH' region motif is present at residues 46 to 56 (ITPYDSTHLGH). The 'ERGGDP' region signature appears at 188–193 (ERGGDP). W228 is a binding site for L-cysteinyl-5'-AMP. A Zn(2+)-binding site is contributed by C232. 250–252 (GSD) contacts L-cysteinyl-5'-AMP. H257 contributes to the Zn(2+) binding site. I284 serves as a coordination point for L-cysteinyl-5'-AMP. The 'KMSKS' region motif lies at 290–294 (KMSKS).

This sequence belongs to the class-I aminoacyl-tRNA synthetase family. MshC subfamily. As to quaternary structure, monomer. The cofactor is Zn(2+).

It catalyses the reaction 1D-myo-inositol 2-amino-2-deoxy-alpha-D-glucopyranoside + L-cysteine + ATP = 1D-myo-inositol 2-(L-cysteinylamino)-2-deoxy-alpha-D-glucopyranoside + AMP + diphosphate + H(+). In terms of biological role, catalyzes the ATP-dependent condensation of GlcN-Ins and L-cysteine to form L-Cys-GlcN-Ins. The sequence is that of L-cysteine:1D-myo-inositol 2-amino-2-deoxy-alpha-D-glucopyranoside ligase 2 from Corynebacterium jeikeium (strain K411).